The following is a 710-amino-acid chain: Solute carrier organic anion transporter family member 3A1 (710 aa).

N-acetylmethionine is present on methionine 1. The span at 1-15 shows a compositional bias: gly residues; it reads MQGKKPGGSSGGGRS. Residues 1–25 are disordered; the sequence is MQGKKPGGSSGGGRSGELQGDEAQR. Topologically, residues 1–40 are cytoplasmic; it reads MQGKKPGGSSGGGRSGELQGDEAQRNKKKKKKVSCFSNIK. The helical transmembrane segment at 41 to 60 threads the bilayer; that stretch reads IFLVSECALMLAQGTVGAYL. Over 61-79 the chain is Extracellular; that stretch reads VSVLTTLERRFNLQSADVG. Residues 80–100 traverse the membrane as a helical segment; that stretch reads VIASSFEIGNLALILFVSYFG. Topologically, residues 101 to 106 are cytoplasmic; sequence ARGHRP. Residues 107–131 form a helical membrane-spanning segment; it reads RLIGCGGIVMALGALLSALPEFLTH. The Extracellular segment spans residues 132-174; it reads QYKYEAGEIRWGAEGRDVCATNGSSSDEGPDPDLICRNRTATN. N-linked (GlcNAc...) asparagine glycans are attached at residues asparagine 153 and asparagine 169. A helical membrane pass occupies residues 175 to 203; it reads MMYLLLIGAQVLLGIGATPVQPLGVSYID. The Cytoplasmic portion of the chain corresponds to 204–222; it reads DHVRRKDSSLYIGILFTML. Residues 223-243 traverse the membrane as a helical segment; that stretch reads VFGPACGFILGSFCTKIYVDA. Topologically, residues 244–261 are extracellular; that stretch reads VFIDTSNLDITPDDPRWI. A helical membrane pass occupies residues 262-286; the sequence is GAWWGGFLLCGALLFFSSLLMFGFP. The Cytoplasmic portion of the chain corresponds to 287–344; it reads QSLPPHSEPGMESEQAMLPEREYERPKPSNGVLRHPLEPDSSASCFQQLRVIPKVTKH. The chain crosses the membrane as a helical span at residues 345–366; that stretch reads LLSNPVFTCIVLAACMEIAVVA. The Extracellular segment spans residues 367–386; the sequence is GFAAFLGKYLEQQFNLTTSS. Residue asparagine 381 is glycosylated (N-linked (GlcNAc...) asparagine). A helical membrane pass occupies residues 387–410; the sequence is ANQLLGMTAIPCACLGIFLGGLLV. At 411–414 the chain is on the cytoplasmic side; that stretch reads KKLS. A helical membrane pass occupies residues 415–438; it reads LSALGAIRMAMLVNLVSTACYVSF. The Extracellular segment spans residues 439 to 539; the sequence is LFLGCDTVPV…PGCQEAFLTF (101 aa). The N-linked (GlcNAc...) asparagine glycan is linked to asparagine 457. A Kazal-like domain is found at 465–513; it reads LDPYSPCNNNCECQTDSFTPVCGADGITYLSACFAGCNSTNLTGCACLT. Cystine bridges form between cysteine 471/cysteine 501, cysteine 477/cysteine 497, and cysteine 486/cysteine 511. 3 N-linked (GlcNAc...) asparagine glycosylation sites follow: asparagine 502, asparagine 505, and asparagine 519. The helical transmembrane segment at 540–562 threads the bilayer; that stretch reads LCVMCVCSLIGAMAQTPSVIILI. The Cytoplasmic portion of the chain corresponds to 563-571; the sequence is RTVSPELKS. Residues 572–597 form a helical membrane-spanning segment; sequence YALGVLFLLLRLLGFIPPPLIFGAGI. Topologically, residues 598-630 are extracellular; the sequence is DSTCLFWSTFCGEQGACVLYDNVVYRYLYVSIA. A helical transmembrane segment spans residues 631 to 648; the sequence is IALKSFAFILYTTTWQCL. Residues 649–705 lie on the Cytoplasmic side of the membrane; the sequence is RKNYKRYIKNHEGGLSTSEFLASTLTLDNLGRDPVPAHQTHRTKFIYNLEDHEWCEN.

The protein belongs to the organo anion transporter (TC 2.A.60) family. In terms of tissue distribution, expressed in many brain regions, including frontal cortex, brain stem and cerebellum. Associated with neuronal bodies in a punctated matter. Detected at the arcuate nucleus and the choroid plexus (at protein level). Little expression, if any, in oligodendrocytes. In the cardiovascular system, detected in cardiac muscle cells and endothelial cells of aorta, coronary artery and left ventricular endocardium (at protein level). In the respiratory system, detected in alveolar epithelial cells and in mucosal epithelium of the trachea (at protein level). In the reproductive system, detected in spermatozoa, oocytes, smooth muscle cells of the ovary, epithelium of the glandula uterine, smooth muscle cells of the myometrium and epithelium of the endometrium (at protein level). In the kidney, detected in afferent and efferent arterioles, and the epithelium of distal tubules and collecting tubules (at protein level).

It is found in the basolateral cell membrane. The protein localises to the apical cell membrane. It localises to the basal cell membrane. The enzyme catalyses L-thyroxine(out) = L-thyroxine(in). It carries out the reaction prostaglandin E1(out) = prostaglandin E1(in). The catalysed reaction is prostaglandin E2(out) = prostaglandin E2(in). It catalyses the reaction prostaglandin F2alpha(out) = prostaglandin F2alpha(in). The enzyme catalyses (5Z,8Z,11Z,14Z)-eicosatetraenoate(out) = (5Z,8Z,11Z,14Z)-eicosatetraenoate(in). It carries out the reaction taurocholate(out) = taurocholate(in). The catalysed reaction is glycocholate(out) = glycocholate(in). It catalyses the reaction estrone 3-sulfate(out) = estrone 3-sulfate(in). The enzyme catalyses argipressin(out) = argipressin(in). In terms of biological role, putative organic anion antiporter with apparent broad substrate specificity. Recognizes various substrates including thyroid hormone L-thyroxine, prostanoids such as prostaglandin E1 and E2, bile acids such as taurocholate, glycolate and glycochenodeoxycholate and peptide hormones such as L-arginine vasopressin, likely operating in a tissue-specific manner. The transport mechanism, its electrogenicity and potential tissue-specific counterions remain to be elucidated. The protein is Solute carrier organic anion transporter family member 3A1 (Slco3a1) of Rattus norvegicus (Rat).